Consider the following 247-residue polypeptide: Transmembrane protein 33 (247 aa).

Ala2 is subject to N-acetylalanine. At 2 to 31 (ADTTPNGPQGAGAVQFMMTNKLDTAMWLSR) the chain is on the lumenal side. Residues 32-52 (LFTVYCSALFVLPLLGLHEAA) form a helical membrane-spanning segment. Residues 53 to 100 (SFYQRALLANALTSALRLHQRLPHFQLSRAFLAQALLEDSCHYLLYSL) are Cytoplasmic-facing. The helical transmembrane segment at 101 to 121 (IFVNSYPVTMSIFPVLLFSLL) threads the bilayer. Over 122 to 155 (HAATYTKKVLDAKGSNSLPLLRSVLDKLSTNQQN) the chain is Lumenal. The helical transmembrane segment at 156–176 (ILKFIACNEIFLMPATVFMLF) threads the bilayer. Topologically, residues 177 to 247 (SGQGSLLQPF…FISRLAPTVA (71 aa)) are cytoplasmic.

It belongs to the PER33/POM33 family. In terms of assembly, interacts with EIF2AK3. Interacts with ARL6IP1, isoform RTN1-A of RTN1, isoform RTN2-B of RTN2, isoform 3 of RTN3 and isoform 3 of RTN4. Interacts with RNF5. Interacts with RNF26. Interacts with PKD2. Highly expressed in the liver and significantly in brain, lungs and kidneys.

The protein resides in the endoplasmic reticulum membrane. It is found in the melanosome. It localises to the nucleus envelope. In terms of biological role, acts as a regulator of the tubular endoplasmic reticulum (ER) network by modulating intracellular calcium homeostasis. Mechanistically, stimulates PKD2 calcium-dependent activity. Suppresses the RTN3/4-induced formation of the ER tubules. Positively regulates PERK-mediated and IRE1-mediated unfolded protein response signaling. Plays an essential role in VEGF-mediated release of Ca(2+) from ER stores during angiogenesis. Also plays a role in the modulation of innate immune signaling through the cGAS-STING pathway by interacting with RNF26. Participates in lipid metabolism by acting as a downstream effector of the pyruvate kinase/PKM. Forms a complex with RNF5 to facilitate polyubiquitination and subsequent degradation of SCAP on the ER membrane. The polypeptide is Transmembrane protein 33 (Tmem33) (Rattus norvegicus (Rat)).